The sequence spans 337 residues: Protein hairy (337 aa).

The interval 29–48 (KSDRRSNKPIMEKRRRARIN) is interaction with Topors. The region spanning 31 to 88 (DRRSNKPIMEKRRRARINNCLNELKTLILDATKKDPARHSKLEKADILEKTVKHLQEL) is the bHLH domain. Residues 107–136 (FKAGFADCVNEVSRFPGIEPAQRRRLLQHL) enclose the Orange domain. Disordered regions lie at residues 146–178 (ELHQ…SQQG) and 259–311 (MPQR…VIQR). The span at 263-301 (TASTGSASSHSSAGYESAPGSSSSCSYAPPSPANSSYEP) shows a compositional bias: low complexity. A WRPW motif motif is present at residues 334 to 337 (WRPW).

As to quaternary structure, transcription repression requires formation of a complex with a corepressor protein (Groucho). Interacts with gro (via WPRW motif) and Topors. In terms of processing, ubiquitinated by Topors.

Its subcellular location is the nucleus. Functionally, pair-rule protein that regulates embryonic segmentation and adult bristle patterning. Transcriptional repressor of genes that require a bHLH protein for their transcription (e.g. ftz). The sequence is that of Protein hairy from Drosophila melanogaster (Fruit fly).